A 280-amino-acid polypeptide reads, in one-letter code: MPADIMEKNSSSPVAATPASVNTTPDKPKTASEHRKSSKPIMEKRRRARINESLSQLKTLILDALKKDSSRHSKLEKADILEMTVKHLRNLQRAQMTAALSTDPSVLGKYRAGFSECMNEVTRFLSTCEGVNTEVRTRLLGHLANCMTQINAMTYPGQPHPALQAPPPPPPGPGGPQHAPFAPPPPLVPIPGGAAPPPGGAPCKLGSPAGEAAKVFGGFQVVPAPDGQFAFLIPNGAFAHSGPVIPVYTSNSGTSVGPNAVSPSSGPSLTADSMWRPWRN.

A disordered region spans residues 1–44; sequence MPADIMEKNSSSPVAATPASVNTTPDKPKTASEHRKSSKPIMEK. Residues 10–21 show a composition bias toward low complexity; it reads SSSPVAATPASV. Residues 26-35 are compositionally biased toward basic and acidic residues; the sequence is DKPKTASEHR. The bHLH domain maps to 34–91; that stretch reads HRKSSKPIMEKRRRARINESLSQLKTLILDALKKDSSRHSKLEKADILEMTVKHLRNL. Residues 110 to 143 form the Orange domain; sequence YRAGFSECMNEVTRFLSTCEGVNTEVRTRLLGHL. Disordered regions lie at residues 157–200 and 254–280; these read GQPH…PPGG and TSVG…PWRN. Pro residues-rich tracts occupy residues 164–174 and 181–200; these read QAPPPPPPGPG and FAPP…PPGG. Residues 254–271 are compositionally biased toward polar residues; sequence TSVGPNAVSPSSGPSLTA. The short motif at 275-278 is the WRPW motif element; sequence WRPW.

Transcription repression requires formation of a complex with a corepressor protein of the Groucho/TLE family. Interacts with SIRT1. Interacts (via WPRW motif) with TLE1, and more weakly with TLE2. Interacts with HES6. Interacts with an FA complex, composed of FANCA, FANCF, FANCG and FANCL, but not of FANCC, nor FANCE.

It localises to the nucleus. Transcriptional repressor of genes that require a bHLH protein for their transcription. May act as a negative regulator of myogenesis by inhibiting the functions of MYOD1 and ASH1. Binds DNA on N-box motifs: 5'-CACNAG-3' with high affinity and on E-box motifs: 5'-CANNTG-3' with low affinity. May play a role in a functional FA core complex response to DNA cross-link damage, being required for the stability and nuclear localization of FA core complex proteins, as well as for FANCD2 monoubiquitination in response to DNA damage. This Bos taurus (Bovine) protein is Transcription factor HES-1 (HES1).